We begin with the raw amino-acid sequence, 126 residues long: MMTPTIPVSPLDRLLVEGIGPHELVRRKLMCLFNSCASAGGETLPPLLTRGMPEWHGLNVGDKRVLNWFCRELRAAILRYEPRINVLRVSVKDAYHQPLALYLEAILQDEPEPLRLDITYYNGRWR.

This sequence belongs to the GpW/Gp25 family. IraD subfamily. Interacts with RssB.

Its subcellular location is the cytoplasm. Inhibits RpoS proteolysis by regulating RssB activity, thereby increasing the stability of the sigma stress factor RpoS during oxidative stress. Its effect on RpoS stability is due to its interaction with RssB, which probably blocks the interaction of RssB with RpoS, and the consequent delivery of the RssB-RpoS complex to the ClpXP protein degradation pathway. The sequence is that of Anti-adapter protein IraD from Salmonella arizonae (strain ATCC BAA-731 / CDC346-86 / RSK2980).